The primary structure comprises 222 residues: Pyrrolidone-carboxylate peptidase (222 aa).

Residues Glu80, Cys146, and His170 contribute to the active site.

This sequence belongs to the peptidase C15 family. In terms of assembly, homotetramer.

Its subcellular location is the cytoplasm. The enzyme catalyses Release of an N-terminal pyroglutamyl group from a polypeptide, the second amino acid generally not being Pro.. Removes 5-oxoproline from various penultimate amino acid residues except L-proline. This Mycobacterium marinum (strain ATCC BAA-535 / M) protein is Pyrrolidone-carboxylate peptidase.